The primary structure comprises 518 residues: Cytochrome P450 736A117 (518 aa).

Asparagine 12 carries an N-linked (GlcNAc...) asparagine glycan. The chain crosses the membrane as a helical span at residues 17-37 (FLQPLAFTLLAIFLVLLYTWY). N-linked (GlcNAc...) asparagine glycosylation is found at asparagine 185, asparagine 275, and asparagine 356. Cysteine 460 provides a ligand contact to heme.

The protein belongs to the cytochrome P450 family. It depends on heme as a cofactor. Expressed at similar levels in fruit kernel, seedlings, leaves, stems and buds.

It is found in the membrane. This Prunus mume (Japanese apricot) protein is Cytochrome P450 736A117.